Consider the following 813-residue polypeptide: Tax1-binding protein 1 homolog (813 aa).

Residues Ser124, Ser138, and Ser225 each carry the phosphoserine modification. Residues 144-627 (TTKAGLLELK…LENQAERKME (484 aa)) adopt a coiled-coil conformation. The oligomerization stretch occupies residues 320–420 (EEIGRLQLCL…ELKLNAMKKD (101 aa)). Over residues 489–502 (DASVNTDPATSAST) the composition is skewed to polar residues. The disordered stretch occupies residues 489-508 (DASVNTDPATSASTVDVKPS). 3 positions are modified to phosphoserine: Ser617, Ser633, and Ser690. The disordered stretch occupies residues 663–738 (YASQETRDGA…DPPSQHLRGH (76 aa)). UBZ1-type zinc fingers lie at residues 751–777 (HKKC…VESH) and 778–804 (WKVC…VQTH). Residues Cys754, Cys757, His773, His777, Cys781, Cys784, His800, and His804 each contribute to the Zn(2+) site.

Homooligomer. Interacts with TNFAIP3. Interacts with STARD13. Interacts with MYO6. Interacts with TOM1; the interaction is indirect and is mediated by MYO6, which acts as a bridge between TOM1 and TAX1BP1. Interacts with MAVS; this interaction induces MAVS polyubiquitination. Interacts with TNIP1. Interacts with TRAF6; this interaction mediates deubiquitination of TRAF6 and inhibition of NF-kappa-B activation. Interacts with RIPK1; this interaction negatively regulates RIPK1 ubiquitination. Interacts with NBR1. Interacts with TBK1. Interacts with RB1CC1. Interacts with SQSTM1. Interacts with AZI2.

The protein localises to the cytoplasm. It is found in the mitochondrion. It localises to the preautophagosomal structure. Its subcellular location is the cytoplasmic vesicle. The protein resides in the autophagosome. Ubiquitin-binding adapter that participates in inflammatory, antiviral and innate immune processes as well as selective autophagy regulation. Plays a key role in the negative regulation of NF-kappa-B and IRF3 signalings by acting as an adapter for the ubiquitin-editing enzyme A20/TNFAIP3 to bind and inactivate its substrates. Disrupts the interactions between the E3 ubiquitin ligase TRAF3 and TBK1/IKBKE to attenuate 'Lys63'-linked polyubiquitination of TBK1 and thereby IFN-beta production. Also recruits A20/TNFAIP3 to ubiquitinated signaling proteins TRAF6 and RIPK1, leading to their deubiquitination and disruption of IL-1 and TNF-induced NF-kappa-B signaling pathways. Inhibits virus-induced apoptosis by inducing the 'Lys-48'-linked polyubiquitination and degradation of MAVS via recruitment of the E3 ligase ITCH, thereby attenuating MAVS-mediated apoptosis signaling. As a macroautophagy/autophagy receptor, facilitates the xenophagic clearance of pathogenic bacteria such as Salmonella typhimurium and Mycobacterium tuberculosis. Upon NBR1 recruitment to the SQSTM1-ubiquitin condensates, acts as the major recruiter of RB1CC1 to these ubiquitin condensates to promote their autophagic degradation. The protein is Tax1-binding protein 1 homolog (TAX1BP1) of Pongo abelii (Sumatran orangutan).